Reading from the N-terminus, the 136-residue chain is Ribosome-binding factor A (136 aa).

Belongs to the RbfA family. As to quaternary structure, monomer. Binds 30S ribosomal subunits, but not 50S ribosomal subunits or 70S ribosomes.

It is found in the cytoplasm. In terms of biological role, one of several proteins that assist in the late maturation steps of the functional core of the 30S ribosomal subunit. Associates with free 30S ribosomal subunits (but not with 30S subunits that are part of 70S ribosomes or polysomes). Required for efficient processing of 16S rRNA. May interact with the 5'-terminal helix region of 16S rRNA. The protein is Ribosome-binding factor A of Cellvibrio japonicus (strain Ueda107) (Pseudomonas fluorescens subsp. cellulosa).